Here is a 322-residue protein sequence, read N- to C-terminus: MNSLGINIYEILFQILHITLIIIFIIFFAATLSILERKFLAFFQNRHGPNRVGWFGSLQLCADMIKILFKEDWVPQFSKKSIFILSPIIAFVSLLLVIPTIPFTPNFLIINLNIGILFFLMMASLSVYAVLFAGWSSNNKYSLLGAIRASAQTLSYEVFLGLSLMGVIARSGSFNIVDIVNSQKEVWNVIPQFFGFLCFFIAGIALCHRHPFDQPESEQELADGYHIEYSGMKFGLFFIGEYISIITVSALISTVFFGGYFGFWGSSFFWLFLKTVFFILIFILIRASLPRPKYDQIMSFGWKICLPLTLLNLIITAFFILI.

8 helical membrane passes run 15-35 (ILHITLIIIFIIFFAATLSIL), 82-102 (IFILSPIIAFVSLLLVIPTIP), 114-134 (IGILFFLMMASLSVYAVLFAG), 149-169 (ASAQTLSYEVFLGLSLMGVIA), 186-206 (VWNVIPQFFGFLCFFIAGIAL), 243-263 (ISIITVSALISTVFFGGYFGF), 265-285 (GSSFFWLFLKTVFFILIFILI), and 302-322 (WKICLPLTLLNLIITAFFILI).

It belongs to the complex I subunit 1 family. As to quaternary structure, NDH-1 is composed of 13 different subunits. Subunits NuoA, H, J, K, L, M, N constitute the membrane sector of the complex.

It is found in the cell membrane. The enzyme catalyses a quinone + NADH + 5 H(+)(in) = a quinol + NAD(+) + 4 H(+)(out). Its function is as follows. NDH-1 shuttles electrons from NADH, via FMN and iron-sulfur (Fe-S) centers, to quinones in the respiratory chain. The immediate electron acceptor for the enzyme in this species is believed to be ubiquinone. Couples the redox reaction to proton translocation (for every two electrons transferred, four hydrogen ions are translocated across the cytoplasmic membrane), and thus conserves the redox energy in a proton gradient. This subunit may bind ubiquinone. This chain is NADH-quinone oxidoreductase subunit H, found in Buchnera aphidicola subsp. Schizaphis graminum (strain Sg).